The following is a 282-amino-acid chain: Probable aquaporin PIP2-6 (282 aa).

2 helical membrane passes run 39–59 (ALIA…ATVI) and 76–96 (LGIA…TAGI). The NPA 1 signature appears at 102 to 104 (NPA). The next 3 helical transmembrane spans lie at 121–141 (VMYI…VKGI), 163–183 (GTAL…VFSA), and 197–217 (VLAP…TIPI). Residues 223–225 (NPA) carry the NPA 2 motif. The chain crosses the membrane as a helical span at residues 245–265 (IFWAGPFIGALAAAAYHQYIL).

It belongs to the MIP/aquaporin (TC 1.A.8) family. PIP (TC 1.A.8.11) subfamily. Expressed in roots and leaves.

It is found in the cell membrane. In terms of biological role, aquaporins facilitate the transport of water and small neutral solutes across cell membranes. This Oryza sativa subsp. japonica (Rice) protein is Probable aquaporin PIP2-6 (PIP2-6).